Reading from the N-terminus, the 522-residue chain is E3 ubiquitin-protein ligase DMA2 (522 aa).

Disordered regions lie at residues 1 to 56 and 69 to 92; these read MYTP…RPAS and QNSQTASSSAAPDQRLFGTTPSNS. A compositionally biased stretch (low complexity) spans 14-35; the sequence is APTSSMTSNSSSASNANTTSSS. Residues 36 to 49 are compositionally biased toward polar residues; it reads GINPRNRASGTPSN. At S206 the chain carries Phosphoserine. Glycyl lysine isopeptide (Lys-Gly) (interchain with G-Cter in ubiquitin) cross-links involve residues K211, K256, K258, K288, K310, K333, K343, K346, K366, K406, K412, and K423. Positions 295-358 constitute an FHA domain; it reads LVIGRYTERV…SGTFLNHQRL (64 aa). An RING-type zinc finger spans residues 433–477; sequence CSICLCKIKPCQAIFISPCAHSWHFRCVRRLVMLSYPQFVCPNCR.

This sequence belongs to the DMA1 family. In terms of processing, UBC4-dependent autoubiquitination occurs at Lys-211, Lys-258, Lys-288, Lys-310, Lys-333, Lys-343, Lys-346, Lys-366, Lys-406, Lys-412 and Lys-423. UBC4-dependent autoubiquitination is responsible for DMA2 turnover. UBC13/MMS2-dependent autoubiquitination occurs at Lys-258, Lys-310, Lys-346 and Lys-366. Lys-211, Lys-256, Lys-288, Lys-310, Lys-343, Lys-258, Lys-366 and Lys-412 are also ubiquitinated in trans by DMA1 E3 ligase in association with UBC4.

It localises to the cytoplasm. The enzyme catalyses S-ubiquitinyl-[E2 ubiquitin-conjugating enzyme]-L-cysteine + [acceptor protein]-L-lysine = [E2 ubiquitin-conjugating enzyme]-L-cysteine + N(6)-ubiquitinyl-[acceptor protein]-L-lysine.. Its function is as follows. E3 ubiquitin-protein ligase which functions in cell cycle retarding in conjunction with the UBC4 and UBC13/MMS2 complex, 2 E2 ubiquitin conjugating enzymes. Involved in nutritional control of the cell cycle. Required for proper spindle positioning, likely regulating septin ring deposition at the bud neck. This chain is E3 ubiquitin-protein ligase DMA2 (DMA2), found in Saccharomyces cerevisiae (strain ATCC 204508 / S288c) (Baker's yeast).